The sequence spans 209 residues: Ribosomal RNA large subunit methyltransferase E (209 aa).

Residues G63, W65, D83, D99, and D124 each coordinate S-adenosyl-L-methionine. The Proton acceptor role is filled by K164.

This sequence belongs to the class I-like SAM-binding methyltransferase superfamily. RNA methyltransferase RlmE family.

It is found in the cytoplasm. It catalyses the reaction uridine(2552) in 23S rRNA + S-adenosyl-L-methionine = 2'-O-methyluridine(2552) in 23S rRNA + S-adenosyl-L-homocysteine + H(+). Functionally, specifically methylates the uridine in position 2552 of 23S rRNA at the 2'-O position of the ribose in the fully assembled 50S ribosomal subunit. In Shewanella piezotolerans (strain WP3 / JCM 13877), this protein is Ribosomal RNA large subunit methyltransferase E.